The following is an 806-amino-acid chain: Phenylalanine--tRNA ligase beta subunit (806 aa).

The tRNA-binding domain maps to 40–153 (FNSPDYLQLA…ADAIIIDHVS (114 aa)). Residues 413-487 (PFSKKLTVNF…KLIDINKLKP (75 aa)) form the B5 domain. Positions 465, 471, 474, and 475 each coordinate Mg(2+).

It belongs to the phenylalanyl-tRNA synthetase beta subunit family. Type 1 subfamily. As to quaternary structure, tetramer of two alpha and two beta subunits. Mg(2+) is required as a cofactor.

The protein localises to the cytoplasm. The catalysed reaction is tRNA(Phe) + L-phenylalanine + ATP = L-phenylalanyl-tRNA(Phe) + AMP + diphosphate + H(+). The sequence is that of Phenylalanine--tRNA ligase beta subunit (pheT) from Mycoplasma genitalium (strain ATCC 33530 / DSM 19775 / NCTC 10195 / G37) (Mycoplasmoides genitalium).